Here is a 192-residue protein sequence, read N- to C-terminus: MARFGADESWIACEIHMKTPPRRFIVEFKQARRRSKERTNSVWGNTDLKALTREVEEMAPHLFNLTEEPVSPNVAYGPPASPNAEFLIADKENIGLGPEAVTPAEGSENAFSGLLQETPPVSHTRTNSKQRISRKLPERLSLDVRENVERPISRGELATLEAENKRLKRLLAERILTQNLQLKKMLDRFNLN.

To R.meliloti RA0936 and y4nF.

This is an uncharacterized protein from Sinorhizobium fredii (strain NBRC 101917 / NGR234).